The following is a 403-amino-acid chain: Multifunctional CCA protein (403 aa).

ATP is bound by residues glycine 8 and arginine 11. 2 residues coordinate CTP: glycine 8 and arginine 11. Residues aspartate 21 and aspartate 23 each contribute to the Mg(2+) site. The ATP site is built by arginine 91, arginine 137, and arginine 140. Residues arginine 91, arginine 137, and arginine 140 each coordinate CTP. In terms of domain architecture, HD spans 228 to 329 (TGIHTLMVAK…LKVLGLLDVW (102 aa)).

It belongs to the tRNA nucleotidyltransferase/poly(A) polymerase family. Bacterial CCA-adding enzyme type 1 subfamily. Monomer. Can also form homodimers and oligomers. The cofactor is Mg(2+). Ni(2+) is required as a cofactor.

The catalysed reaction is a tRNA precursor + 2 CTP + ATP = a tRNA with a 3' CCA end + 3 diphosphate. It catalyses the reaction a tRNA with a 3' CCA end + 2 CTP + ATP = a tRNA with a 3' CCACCA end + 3 diphosphate. Its function is as follows. Catalyzes the addition and repair of the essential 3'-terminal CCA sequence in tRNAs without using a nucleic acid template. Adds these three nucleotides in the order of C, C, and A to the tRNA nucleotide-73, using CTP and ATP as substrates and producing inorganic pyrophosphate. tRNA 3'-terminal CCA addition is required both for tRNA processing and repair. Also involved in tRNA surveillance by mediating tandem CCA addition to generate a CCACCA at the 3' terminus of unstable tRNAs. While stable tRNAs receive only 3'-terminal CCA, unstable tRNAs are marked with CCACCA and rapidly degraded. The protein is Multifunctional CCA protein of Vibrio cholerae serotype O1 (strain ATCC 39541 / Classical Ogawa 395 / O395).